Reading from the N-terminus, the 688-residue chain is Glycine--tRNA ligase beta subunit (688 aa).

This sequence belongs to the class-II aminoacyl-tRNA synthetase family. In terms of assembly, tetramer of two alpha and two beta subunits.

The protein resides in the cytoplasm. The enzyme catalyses tRNA(Gly) + glycine + ATP = glycyl-tRNA(Gly) + AMP + diphosphate. The polypeptide is Glycine--tRNA ligase beta subunit (Desulforudis audaxviator (strain MP104C)).